The sequence spans 501 residues: Glutamate--tRNA ligase (501 aa).

Positions 21–31 (PSPTGTPHVGL) match the 'HIGH' region motif. Residues 266–270 (KLSKR) carry the 'KMSKS' region motif. ATP is bound at residue Lys269.

It belongs to the class-I aminoacyl-tRNA synthetase family. Glutamate--tRNA ligase type 1 subfamily. In terms of assembly, monomer.

The protein resides in the cytoplasm. It catalyses the reaction tRNA(Glu) + L-glutamate + ATP = L-glutamyl-tRNA(Glu) + AMP + diphosphate. In terms of biological role, catalyzes the attachment of glutamate to tRNA(Glu) in a two-step reaction: glutamate is first activated by ATP to form Glu-AMP and then transferred to the acceptor end of tRNA(Glu). This chain is Glutamate--tRNA ligase, found in Kineococcus radiotolerans (strain ATCC BAA-149 / DSM 14245 / SRS30216).